Here is a 422-residue protein sequence, read N- to C-terminus: Glutamate-1-semialdehyde 2,1-aminomutase (422 aa).

Lysine 264 is subject to N6-(pyridoxal phosphate)lysine.

It belongs to the class-III pyridoxal-phosphate-dependent aminotransferase family. HemL subfamily. In terms of assembly, homodimer. Pyridoxal 5'-phosphate is required as a cofactor.

It localises to the cytoplasm. The enzyme catalyses (S)-4-amino-5-oxopentanoate = 5-aminolevulinate. It functions in the pathway porphyrin-containing compound metabolism; protoporphyrin-IX biosynthesis; 5-aminolevulinate from L-glutamyl-tRNA(Glu): step 2/2. The polypeptide is Glutamate-1-semialdehyde 2,1-aminomutase (Clostridium kluyveri (strain ATCC 8527 / DSM 555 / NBRC 12016 / NCIMB 10680 / K1)).